A 329-amino-acid polypeptide reads, in one-letter code: Ketol-acid reductoisomerase (NADP(+)) (329 aa).

One can recognise a KARI N-terminal Rossmann domain in the interval 2-182; it reads TQLFYDTDAD…GGTRAGILET (181 aa). Residues 25–28, Ser-51, Ser-53, and 83–86 each bind NADP(+); these read YGSQ and DEFQ. Residue His-108 is part of the active site. Gly-134 serves as a coordination point for NADP(+). In terms of domain architecture, KARI C-terminal knotted spans 183–328; that stretch reads NFKEETETDL…KGLRAMFSWL (146 aa). Mg(2+)-binding residues include Asp-191, Glu-195, Glu-227, and Glu-231. Ser-252 provides a ligand contact to substrate.

The protein belongs to the ketol-acid reductoisomerase family. It depends on Mg(2+) as a cofactor.

It carries out the reaction (2R)-2,3-dihydroxy-3-methylbutanoate + NADP(+) = (2S)-2-acetolactate + NADPH + H(+). The catalysed reaction is (2R,3R)-2,3-dihydroxy-3-methylpentanoate + NADP(+) = (S)-2-ethyl-2-hydroxy-3-oxobutanoate + NADPH + H(+). It participates in amino-acid biosynthesis; L-isoleucine biosynthesis; L-isoleucine from 2-oxobutanoate: step 2/4. The protein operates within amino-acid biosynthesis; L-valine biosynthesis; L-valine from pyruvate: step 2/4. Involved in the biosynthesis of branched-chain amino acids (BCAA). Catalyzes an alkyl-migration followed by a ketol-acid reduction of (S)-2-acetolactate (S2AL) to yield (R)-2,3-dihydroxy-isovalerate. In the isomerase reaction, S2AL is rearranged via a Mg-dependent methyl migration to produce 3-hydroxy-3-methyl-2-ketobutyrate (HMKB). In the reductase reaction, this 2-ketoacid undergoes a metal-dependent reduction by NADPH to yield (R)-2,3-dihydroxy-isovalerate. The protein is Ketol-acid reductoisomerase (NADP(+)) of Prochlorococcus marinus (strain MIT 9515).